A 439-amino-acid polypeptide reads, in one-letter code: MLRFAPSPTGDMHIGNLRAAIFNYIVAKQQYKPFLIRIEDTDKERNIEGKDQEILEILKLMGISWDKLVYQSHNIDYHREMAEKLLKENKAFYCYASAEFLEREKEKAKNEKRPFRYSDEWATLEKDKHHAPVVRLKAPNHAVSFNDAIKKEVKFEPDELDSFVLLRQDKSPTYNFACACDDLLYKISLIIRGEDHVSNTPKQILIQQALGSNDPIVYAHLPIILDEVSGKKMSKRDEASSVKWLLNQGFLPVAIANYLITIGNKVPKEVFSLDEAIEWFSLENLSSSPAHFNLKYLKHLNHEHLKLLDDDKLLELTSIKDKNLLGLLRLFIEECGTLLELREKISLFLEPKDIVKTYENEDFKERCLALFNALTSMDFQAYKDFESFKKEAMRLSQLKGKDFFKPLRILLTGNSHGVELPLIFPYIQSHHQEVLRLKA.

Positions Pro6 to Asn16 match the 'HIGH' region motif. Positions Lys232–Arg236 match the 'KMSKS' region motif. Position 235 (Lys235) interacts with ATP.

This sequence belongs to the class-I aminoacyl-tRNA synthetase family. Glutamate--tRNA ligase type 1 subfamily. In terms of assembly, monomer.

It is found in the cytoplasm. The enzyme catalyses tRNA(Glu) + L-glutamate + ATP = L-glutamyl-tRNA(Gln) + AMP + diphosphate. Functionally, aminoacylates tRNA(Gln) with glutamate. Does not aminoacylate tRNA(Glu). This is GlutamylGlutaminyl-tRNA synthetase (gltX2) from Helicobacter pylori (strain ATCC 700392 / 26695) (Campylobacter pylori).